Consider the following 139-residue polypeptide: MTKRQNRMTLVALLVIGVSLTGYLGLKAFNENLLYFFSPTDVTEGKAPKGKSFRLGGMVAKNSVKRDGVKVTFDVTDYVNTFRVNYSGILPDLFKEGQGIITTGSLINGIFIATEVLAKHDESYMPPEVADALEKAKNK.

The Cytoplasmic portion of the chain corresponds to 1–7 (MTKRQNR). A helical; Signal-anchor for type II membrane protein transmembrane segment spans residues 8 to 28 (MTLVALLVIGVSLTGYLGLKA). Residues 29 to 139 (FNENLLYFFS…ADALEKAKNK (111 aa)) lie on the Periplasmic side of the membrane. Residues H120 and Y124 each coordinate heme.

It belongs to the CcmE/CycJ family.

It is found in the cell inner membrane. In terms of biological role, heme chaperone required for the biogenesis of c-type cytochromes. Transiently binds heme delivered by CcmC and transfers the heme to apo-cytochromes in a process facilitated by CcmF and CcmH. The polypeptide is Cytochrome c-type biogenesis protein CcmE (Ruthia magnifica subsp. Calyptogena magnifica).